A 74-amino-acid chain; its full sequence is Protein krueppel (74 aa).

4 consecutive C2H2-type zinc fingers follow at residues 1–4 (ERTH), 10–32 (FKCP…MRLH), 38–60 (YHCS…LRVH), and 66–74 (YTCEICKAK).

It belongs to the krueppel C2H2-type zinc-finger protein family.

It is found in the nucleus. Krueppel is a gap class segmentation protein. The polypeptide is Protein krueppel (Kr) (Bradysia coprophila (Dark-winged fungus gnat)).